The following is a 744-amino-acid chain: Prestin (744 aa).

The Cytoplasmic segment spans residues methionine 1–tyrosine 79. A helical membrane pass occupies residues valine 80–alanine 105. At alanine 106–proline 109 the chain is on the extracellular side. The helical transmembrane segment at valine 110 to phenylalanine 125 threads the bilayer. At phenylalanine 126–phenylalanine 137 the chain is on the cytoplasmic side. Residues alanine 138 to valine 147 traverse the membrane as a helical segment. Topologically, residues alanine 148–valine 178 are extracellular. An Involved in motor function motif is present at residues isoleucine 158–threonine 168. N-linked (GlcNAc...) asparagine glycosylation is found at asparagine 163 and asparagine 166. The helical transmembrane segment at alanine 179–cysteine 196 threads the bilayer. Over arginine 197–proline 208 the chain is Cytoplasmic. The chain crosses the membrane as a helical span at residues leucine 209–phenylalanine 230. Residues glycine 231–valine 243 are Extracellular-facing. The segment at residues valine 244–glutamine 252 is an intramembrane region (helical). Topologically, residues asparagine 253–asparagine 258 are extracellular. A helical membrane pass occupies residues valine 259 to phenylalanine 282. Over lysine 283–proline 291 the chain is Cytoplasmic. Residues leucine 292–serine 304 traverse the membrane as a helical segment. The Extracellular segment spans residues alanine 305–histidine 337. Residues leucine 338–leucine 361 form a helical membrane-spanning segment. The Cytoplasmic segment spans residues alanine 362 to aspartate 370. A helical membrane pass occupies residues glycine 371 to phenylalanine 388. Residues glutamine 389–serine 396 are Extracellular-facing. A helical membrane pass occupies residues leucine 397–threonine 406. Serine 398 serves as a coordination point for salicylate. Residues glycine 407–threonine 410 lie on the Cytoplasmic side of the membrane. Residues glutamine 411–glycine 429 traverse the membrane as a helical segment. The Extracellular segment spans residues phenylalanine 430–proline 436. The helical transmembrane segment at glutamine 437–phenylalanine 455 threads the bilayer. At serine 456–leucine 469 the chain is on the cytoplasmic side. A helical membrane pass occupies residues threonine 470 to leucine 484. Residue aspartate 485 is a topological domain, extracellular. A helical transmembrane segment spans residues tyrosine 486–leucine 497. The Cytoplasmic portion of the chain corresponds to threonine 498–alanine 744. The interval serine 505 to alanine 718 is extended region for STAS domain. The STAS domain occupies alanine 525–serine 713. Residues glutamate 717 to alanine 744 form a disordered region.

This sequence belongs to the SLC26A/SulP transporter (TC 2.A.53) family. In terms of assembly, homodimer. Interacts (via STAS domain) with CALM; this interaction is calcium-dependent and the STAS domain interacts with only one lobe of CALM which is an elongated conformation. Interacts with MYH1. As to expression, highly expressed in mature outer hair cells, but not in inner hair cells or other cells of the basilar membrane and the organ of Corti.

Its subcellular location is the lateral cell membrane. The catalysed reaction is 2 hydrogencarbonate(in) + chloride(out) = 2 hydrogencarbonate(out) + chloride(in). Its function is as follows. Voltage-sensitive motor protein that drives outer hair cell (OHC) electromotility (eM) and participates in sound amplification in the hearing organ. Converts changes in the transmembrane electric potential into mechanical displacements resulting in the coupling of its expansion to movement of a charged voltage sensor across the lipid membrane. The nature of the voltage sensor is not completely clear, and two models compete. In the first model, acts as an incomplete transporter where intracellular chloride anion acts as extrinsic voltage sensor that drives conformational change in the protein which is sufficient to produce a length change in the plane of the membrane and hence in the length of the OHC. The second model in which multiple charged amino acid residues are distributed at the intracellular and extracellular membrane interfaces that form an intrinsic voltage sensor, whose movement produces the non-linear capacitance (NLC). However, the effective voltage sensor may be the result of a hybrid voltage sensor assembled from intrinsic charge (charged residues) and extrinsic charge (bound anion). Notably, binding of anions to the anion-binding pocket partially neutralizes the intrinsic positive charge rather than to form an electrically negative sensor, therefore remaining charge may serve as voltage sensor that, after depolarization, moves from down (expanded state) to up (contracted) conformation, which is accompanied by an eccentric contraction of the intermembrane cross-sectional area of the protein as well as a major increase in the hydrophobic thickness of the protein having as consequences the plasma membrane thickening and the cell contraction after membrane depolarization. The anion-binding pocket transits from the inward-open (Down) state, where it is exposed toward the intracellular solvent in the absence of anion, to the occluded (Up) state upon anion binding. Salicylate competes for the anion-binding site and inhibits the voltage-sensor movement, and therefore inhibits the charge transfer and electromotility by displacing Cl(-) from the anion-binding site and by preventing the structural transitions to the contracted state. In addition, can act as a weak Cl(-)/HCO3 (-) antiporter across the cell membrane and so regulate the intracellular pH of the outer hair cells (OHCs), while firstly found as being unable to mediate electrogenic anion transport. Moreover, supports a role in cardiac mechanical amplification serving as an elastic element to enhance the actomyosin- based sarcomere contraction system. In Meriones unguiculatus (Mongolian jird), this protein is Prestin.